Reading from the N-terminus, the 484-residue chain is Glutamyl-tRNA(Gln) amidotransferase subunit A (484 aa).

Residues lysine 77 and serine 152 each act as charge relay system in the active site. Residue serine 176 is the Acyl-ester intermediate of the active site.

It belongs to the amidase family. GatA subfamily. As to quaternary structure, heterotrimer of A, B and C subunits.

The enzyme catalyses L-glutamyl-tRNA(Gln) + L-glutamine + ATP + H2O = L-glutaminyl-tRNA(Gln) + L-glutamate + ADP + phosphate + H(+). Functionally, allows the formation of correctly charged Gln-tRNA(Gln) through the transamidation of misacylated Glu-tRNA(Gln) in organisms which lack glutaminyl-tRNA synthetase. The reaction takes place in the presence of glutamine and ATP through an activated gamma-phospho-Glu-tRNA(Gln). This is Glutamyl-tRNA(Gln) amidotransferase subunit A from Lacticaseibacillus casei (strain BL23) (Lactobacillus casei).